The chain runs to 133 residues: CDGSH iron-sulfur domain-containing protein 2 homolog (133 aa).

The Lumenal portion of the chain corresponds to 1–35 (MEPISHLVKSSLPNYLSSLPIPDSVGGWFKLSFKD). The chain crosses the membrane as a helical span at residues 36-58 (WLALIPPTVVVAGIGYTAYLAYC). The Cytoplasmic segment spans residues 59–133 (PAAKAICSAK…DNVGPIVIKK (75 aa)). Cys-100, Cys-102, Cys-111, and His-115 together coordinate [2Fe-2S] cluster.

It belongs to the CISD protein family. CISD2 subfamily. [2Fe-2S] cluster is required as a cofactor.

It localises to the endoplasmic reticulum membrane. The protein is CDGSH iron-sulfur domain-containing protein 2 homolog of Drosophila yakuba (Fruit fly).